We begin with the raw amino-acid sequence, 215 residues long: Late embryogenesis abundant protein 14 (215 aa).

Disordered stretches follow at residues Met1–Gly129 and Ser190–Gln215. 4 stretches are compositionally biased toward basic and acidic residues: residues Gly13–Gly24, Glu32–Ala41, Gly54–Ala81, and Ala88–Ala111. Over residues Asp192–Gln215 the composition is skewed to polar residues.

Belongs to the LEA type 4 family. Expressed in the shoot apex and leaves. Expressed in dry seeds. Expressed in roots and leaves.

The protein localises to the nucleus. This chain is Late embryogenesis abundant protein 14, found in Oryza sativa subsp. japonica (Rice).